The chain runs to 271 residues: MSYLLRKPQSHEVSNGVKLVHEVTTSNSDLTYVEFKVLDLASGSSYTEELKKQEICIVAVTGKITVTDHESTFENIGTRESVFERKPTDSVYISNDRAFEITAVSDARVALCYSPSEKQLPTKLIKAEDNGIEHRGQFSNKRTVHNILPDSDPSANSLLVVEVYTDSGNWSSYPPHKHDQDNLPEESFLEETYYHELDPGQGFVFQRVYTDDRSIDETMTVGNENVVIVPAGYHPVGVPDGYTSYYLNVMAGPTRKWKFYNDPAHEWILER.

Belongs to the isomerase IolB family.

The catalysed reaction is 5-deoxy-D-glucuronate = 5-dehydro-2-deoxy-D-gluconate. It functions in the pathway polyol metabolism; myo-inositol degradation into acetyl-CoA; acetyl-CoA from myo-inositol: step 4/7. Involved in the isomerization of 5-deoxy-glucuronate (5DG) to 5-dehydro-2-deoxy-D-gluconate (DKG or 2-deoxy-5-keto-D-gluconate). This is 5-deoxy-glucuronate isomerase (iolB) from Bacillus subtilis (strain 168).